Reading from the N-terminus, the 656-residue chain is Solute carrier family 5 member 4A (656 aa).

Residues 1–28 lie on the Cytoplasmic side of the membrane; it reads MASTASVSTSTASSELSSLSNNINNAAD. The helical transmembrane segment at 29–47 threads the bilayer; it reads ISVIVIYFVVVMAVGVWAM. Topologically, residues 48–64 are extracellular; the sequence is LKTNRSTVGGFFLAGRS. The helical transmembrane segment at 65 to 85 threads the bilayer; sequence MTWWPMGASLFASNIGSGHFV. The Cytoplasmic segment spans residues 86–105; it reads GLAGTGAASGIAVTAFESHS. A helical transmembrane segment spans residues 106 to 126; it reads FALLLVLGWIFVPIYIKAGVM. At 127-171 the chain is on the extracellular side; sequence TMPEYLKKRFGGKRLQIYLSILFLFICVILTISADIFSGAIFIKL. A helical membrane pass occupies residues 172–191; the sequence is ALGLNLYLAILILLAITAIF. The Cytoplasmic portion of the chain corresponds to 192-208; the sequence is TITGGLASVIYTDTVQA. A helical transmembrane segment spans residues 209–229; it reads VIMLVGSFILMVFAFVEVGGY. At 230–270 the chain is on the extracellular side; it reads ESFTEKFMNAIPSVVEGDNLTINSRCYTPQPDSFHIFRDPV. N248 carries N-linked (GlcNAc...) asparagine glycosylation. Residues 271–291 traverse the membrane as a helical segment; the sequence is TGDIPWPGTAFGMPITALWYW. The Cytoplasmic portion of the chain corresponds to 292 to 314; it reads CINQVIVQRCLCGKNLSHVKAAC. The helical transmembrane segment at 315-334 threads the bilayer; sequence ILCGYLKLLPLFFMVMPGMI. Residues 335–423 lie on the Extracellular side of the membrane; that stretch reads SRILYTDMVA…RKKASERELL (89 aa). Residues 424-443 traverse the membrane as a helical segment; sequence IAGRLFVSVLIVTSILWVPI. Over 444–455 the chain is Cytoplasmic; the sequence is VEVSQGGQLVHY. The helical transmembrane segment at 456-476 threads the bilayer; the sequence is TEAISSYLGPPIAAVFLVAVF. The Extracellular segment spans residues 477–526; sequence CKRANEQGAFWGLMVGLVMGLIRMIAEFSYGTGSCLAPSSCPKIICGVHY. The helical transmembrane segment at 527-547 threads the bilayer; it reads LYFAIILFFVCILVILGVSYL. Residues 548–634 lie on the Cytoplasmic side of the membrane; it reads TKPIPDVHLH…TDTTEKPFWR (87 aa). A disordered region spans residues 574–593; it reads DAEDKEENGADDRTEEDQTE. Residues 635 to 655 form a helical membrane-spanning segment; it reads TVMNVNVILLLAVAAFFYGYF.

This sequence belongs to the sodium:solute symporter (SSF) (TC 2.A.21) family. In terms of tissue distribution, expressed in small intestine. Expressed in kidney.

The protein localises to the cell membrane. Not inhibited by phlorizin. In terms of biological role, does not function as sodium/D-glucose symporter. Generates D-glucose-induced depolarization in a pH-dependent manner, with activity in acidic conditions (pH 5) but not neutral conditions. The sequence is that of Solute carrier family 5 member 4A from Mus musculus (Mouse).